A 495-amino-acid polypeptide reads, in one-letter code: ATP synthase subunit beta, chloroplastic (495 aa).

Position 172–179 (G172–T179) interacts with ATP.

The protein belongs to the ATPase alpha/beta chains family. As to quaternary structure, F-type ATPases have 2 components, CF(1) - the catalytic core - and CF(0) - the membrane proton channel. CF(1) has five subunits: alpha(3), beta(3), gamma(1), delta(1), epsilon(1). CF(0) has four main subunits: a(1), b(1), b'(1) and c(9-12).

Its subcellular location is the plastid. It is found in the chloroplast thylakoid membrane. The enzyme catalyses ATP + H2O + 4 H(+)(in) = ADP + phosphate + 5 H(+)(out). Its function is as follows. Produces ATP from ADP in the presence of a proton gradient across the membrane. The catalytic sites are hosted primarily by the beta subunits. In Hyacinthoides non-scripta (English bluebell), this protein is ATP synthase subunit beta, chloroplastic.